Here is an 80-residue protein sequence, read N- to C-terminus: Cytochrome c-553 (80 aa).

Cys-13, Cys-16, His-17, and Met-58 together coordinate heme c.

In terms of processing, binds 1 heme c group covalently per subunit.

Its subcellular location is the periplasm. Natural electron acceptor for a formate dehydrogenase. This Desulfomicrobium norvegicum (strain DSM 1741 / NCIMB 8310) (Desulfovibrio baculatus (strain Norway 4)) protein is Cytochrome c-553.